Consider the following 591-residue polypeptide: L-fucose isomerase (591 aa).

Catalysis depends on proton acceptor residues glutamate 337 and aspartate 361. Residues glutamate 337, aspartate 361, and histidine 528 each coordinate Mn(2+).

This sequence belongs to the L-fucose isomerase family. In terms of assembly, homohexamer. Requires Mn(2+) as cofactor.

Its subcellular location is the cytoplasm. The catalysed reaction is L-fucose = L-fuculose. It functions in the pathway carbohydrate degradation; L-fucose degradation; L-lactaldehyde and glycerone phosphate from L-fucose: step 1/3. Functionally, converts the aldose L-fucose into the corresponding ketose L-fuculose. In Escherichia coli O17:K52:H18 (strain UMN026 / ExPEC), this protein is L-fucose isomerase.